We begin with the raw amino-acid sequence, 347 residues long: Palmitoyltransferase ZDHHC11 (347 aa).

Residues 1–46 (MKEMNICGINKNWVLPEAQENNVKKFLPRPLSRVNGWSPPLHSFQA) lie on the Cytoplasmic side of the membrane. Residues 47 to 67 (ISWITYLAMSIVTFGIFIPFL) traverse the membrane as a helical segment. The Lumenal segment spans residues 68-75 (PYSWKYAA). A helical transmembrane segment spans residues 76 to 96 (NIVMGGVFIFHLIVHLIAITI). The Cytoplasmic segment spans residues 97-170 (DPADTNVRLK…LNNCVGRRNY (74 aa)). In terms of domain architecture, DHHC spans 128–178 (QYCHLCEVTASKKAKHCSACNKCVSGFDHHCKWLNNCVGRRNYWFFFWSVA). Residue cysteine 158 is the S-palmitoyl cysteine intermediate of the active site. The helical transmembrane segment at 171–191 (WFFFWSVASAAVGILGVMIIL) threads the bilayer. The Lumenal portion of the chain corresponds to 192–234 (CYICIQYFVNPDELRTDPLYKEIISENTWLLFLSLWPVPVKTP). A helical membrane pass occupies residues 235 to 255 (IVLSIAVMALLLAIASFVMLG). Topologically, residues 256-347 (HLLIFHLYLI…SPPKICHSED (92 aa)) are cytoplasmic. Over residues 291 to 306 (ELPLQKKGDLPQEKSD) the composition is skewed to basic and acidic residues. The tract at residues 291–332 (ELPLQKKGDLPQEKSDNWAWPKSPPRVGSQKFPVSTLSPKSS) is disordered. Over residues 322 to 331 (FPVSTLSPKS) the composition is skewed to polar residues.

Belongs to the DHHC palmitoyltransferase family. In terms of assembly, interacts with IRF3 and STING1; in presence of DNA viruses recruits IRF3 to STING1 promoting IRF3 phosphorylation and activation.

The protein localises to the endosome membrane. The enzyme catalyses L-cysteinyl-[protein] + hexadecanoyl-CoA = S-hexadecanoyl-L-cysteinyl-[protein] + CoA. Endoplasmic reticulum-localized palmitoyltransferase that could catalyze the addition of palmitate onto various protein substrates and be involved in a variety of cellular processes. Has a palmitoyltransferase activity toward NCDN and regulates NCDN association with endosome membranes through this palmitoylation. May play a role in cell proliferation. Its function is as follows. Also has a palmitoyltransferase activity-independent function in DNA virus-triggered and CGAS-mediated innate immune response. Functions as an adapter that recruits IRF3 to STING1 to promote the activation of that key transcriptional regulator of type I interferon (IFN)-dependent immune response. The sequence is that of Palmitoyltransferase ZDHHC11 from Mus musculus (Mouse).